The sequence spans 192 residues: SRP-independent targeting protein 2 homolog (192 aa).

A run of 2 helical transmembrane segments spans residues 16 to 36 and 102 to 122; these read ILTF…ILRF and WILI…YLLV. The tract at residues 149-192 is disordered; sequence LNQPPQQQQQQQQQQHQQHATPSEPVLSKRQQKLRKKAAKYSRP. The segment covering 151–167 has biased composition (low complexity); sequence QPPQQQQQQQQQQHQQH. Residues 178–192 show a composition bias toward basic residues; the sequence is RQQKLRKKAAKYSRP.

Belongs to the TMEM208 family.

It is found in the endoplasmic reticulum membrane. In terms of biological role, may function in a SRP (signal recognition particle) and GET (guided entry of tail-anchored proteins) independent pathway for targeting a broad range of substrate proteins to the endoplasmic reticulum. Has a role in meiosis. This is SRP-independent targeting protein 2 homolog from Schizosaccharomyces pombe (strain 972 / ATCC 24843) (Fission yeast).